The primary structure comprises 1063 residues: Unconventional myosin-Ic (1063 aa).

Met-1 is subject to N-acetylmethionine. The residue at position 10 (Thr-10) is a Phosphoserine. Residues 47 to 731 enclose the Myosin motor domain; the sequence is GVQDFVLLEN…TLFATEDSLE (685 aa). Residues Asn-88, Tyr-96, 139 to 148, and 192 to 196 each bind ATP; these read SGESGAGKTE and NDNSS. Lys-383 carries the N6-methyllysine modification. Position 408 is a phosphoserine (Ser-408). At Lys-486 the chain carries N6-acetyllysine. Residue Ser-536 is modified to Phosphoserine. An actin-binding region spans residues 608–630; the sequence is LLQLVEILRSKEPAYIRCIKPND. 2 consecutive IQ domains span residues 734 to 757 and 758 to 786; these read RQSLATKIQAAWRGFHWRQKFLRV and KRSAICIQSWWRGTLGRRKAAKRKWAAQT. Ser-864 and Ser-1041 each carry phosphoserine. In terms of domain architecture, TH1 spans 885 to 1059; that stretch reads KDNYPQSVPR…NGHLAVVAPR (175 aa).

Belongs to the TRAFAC class myosin-kinesin ATPase superfamily. Myosin family. Interacts (via its IQ motifs) with CABP1 and CIB1; the interaction with CABP1 and CIB1 is calcium-dependent. Interacts (via tail domain) with PLEKHB1 (via PH domain); the interaction is not affected by the presence or absence of calcium and CALM. Interacts with POLR1A. Interacts with POLR2A. Component of the B-WICH complex, at least composed of SMARCA5/SNF2H, BAZ1B/WSTF, SF3B1, DEK, MYO1C, ERCC6, MYBBP1A and DDX21. Interacts (via its IQ motifs) with CALM; this precludes interaction with YWHAB. Interacts with YWHAB; this precludes interaction with CALM. Interacts with RPS6. Interacts with actin. Interacts with LLPH. Interacts with GLUT4. Interacts (via its IQ motifs) with SH3BGRL3; the interaction is dependent on calcium and takes place at membrane ruffles. Isoform 2 contains a N-acetylmethionine at position 1. Isoform 3 is expressed in small intestine, pancreas, brain, kidney, skin, heart muscle, testis, striated muscle, spleen, liver and lung (at protein level). Expressed in brain, testis, adrenal glands, thymus, spleen, kidney, lung, heart, cochlea and vestibule. Expressed in sensory hair cells of the inner ear. Expressed in adipocytes.

The protein resides in the cytoplasm. It is found in the nucleus. It localises to the cell cortex. Its subcellular location is the cell projection. The protein localises to the stereocilium membrane. The protein resides in the cytoplasmic vesicle. It is found in the ruffle membrane. It localises to the nucleolus. Its subcellular location is the nucleoplasm. Functionally, myosins are actin-based motor molecules with ATPase activity. Unconventional myosins serve in intracellular movements. Their highly divergent tails bind to membranous compartments, which then are moved relative to actin filaments. Involved in glucose transporter recycling in response to insulin by regulating movement of intracellular GLUT4-containing vesicles to the plasma membrane. Component of the hair cell's (the sensory cells of the inner ear) adaptation-motor complex. Acts as a mediator of adaptation of mechanoelectrical transduction in stereocilia of vestibular hair cells. Binds phosphoinositides and links the actin cytoskeleton to cellular membranes. Its function is as follows. Involved in regulation of transcription. Associated with transcriptional active ribosomal genes. Appears to cooperate with the WICH chromatin-remodeling complex to facilitate transcription. Necessary for the formation of the first phosphodiester bond during transcription initiation. In Mus musculus (Mouse), this protein is Unconventional myosin-Ic (Myo1c).